The primary structure comprises 313 residues: Protein FixB (313 aa).

Position 255 to 283 (255 to 283) interacts with FAD; that stretch reads LYLAVGISGQIQHMVGANASQTIFAINKD.

This sequence belongs to the ETF alpha-subunit/FixB family. As to quaternary structure, heterodimer of FixA and FixB.

It participates in amine and polyamine metabolism; carnitine metabolism. In terms of biological role, required for anaerobic carnitine reduction. May bring reductant to CaiA. In Escherichia coli (strain SMS-3-5 / SECEC), this protein is Protein FixB.